Here is a 214-residue protein sequence, read N- to C-terminus: Peptide methionine sulfoxide reductase B1, chloroplastic (214 aa).

A chloroplast-targeting transit peptide spans 1 to 53; sequence MAMRQYAAATAASSSFRARPRARPSCLPAAALPLAPCCGVAWSRASYRRASVR. Positions 58-81 are enriched in low complexity; the sequence is ASSSSSSSSSSPSPQGQAQAQAQG. Residues 58–91 form a disordered region; the sequence is ASSSSSSSSSSPSPQGQAQAQAQGKPNYSTSLTD. One can recognise a MsrB domain in the interval 91-213; the sequence is DEEWRKRLTK…NSASLKLKKT (123 aa). Residues Cys130, Cys133, Cys179, and Cys182 each contribute to the Zn(2+) site. Cys202 acts as the Nucleophile in catalysis.

This sequence belongs to the MsrB Met sulfoxide reductase family. It depends on Zn(2+) as a cofactor. In terms of tissue distribution, expressed in leaves and flowers.

It is found in the plastid. It localises to the chloroplast. It catalyses the reaction L-methionyl-[protein] + [thioredoxin]-disulfide + H2O = L-methionyl-(R)-S-oxide-[protein] + [thioredoxin]-dithiol. In terms of biological role, catalyzes the reduction of methionine sulfoxide (MetSO) to methionine in proteins. Involved in abiotic stress response. Plays a protective role against oxidative stress by restoring activity to proteins that have been inactivated by methionine oxidation. MSRB family specifically reduces the MetSO R-enantiomer. In Oryza sativa subsp. japonica (Rice), this protein is Peptide methionine sulfoxide reductase B1, chloroplastic.